A 60-amino-acid polypeptide reads, in one-letter code: Toxin TdNa2 (60 aa).

The 59-residue stretch at R1–H59 folds into the LCN-type CS-alpha/beta domain. 4 disulfides stabilise this stretch: C11–C58, C15–C37, C23–C42, and C27–C44.

Belongs to the long (4 C-C) scorpion toxin superfamily. Sodium channel inhibitor family. Beta subfamily. As to expression, expressed by the venom gland.

It is found in the secreted. Functionally, inhibits the sodium currents (Nav) in an apparent irreversible manner. Produces small depolarization and induces repetitive firing in squid axons. Is specific for arthropods (crickets, triatomides, crabs and squids), but is non-toxic to mice. The polypeptide is Toxin TdNa2 (Tityus discrepans (Venezuelan scorpion)).